The sequence spans 702 residues: Polyribonucleotide nucleotidyltransferase (702 aa).

Residues Asp485 and Asp491 each coordinate Mg(2+). The KH domain maps to 552–612 (PRTEIICIDP…EGVKKAISII (61 aa)). The 69-residue stretch at 622–690 (GEIYLGKVTK…NQGRINLSRK (69 aa)) folds into the S1 motif domain.

It belongs to the polyribonucleotide nucleotidyltransferase family. Mg(2+) serves as cofactor.

Its subcellular location is the cytoplasm. It carries out the reaction RNA(n+1) + phosphate = RNA(n) + a ribonucleoside 5'-diphosphate. Functionally, involved in mRNA degradation. Catalyzes the phosphorolysis of single-stranded polyribonucleotides processively in the 3'- to 5'-direction. The chain is Polyribonucleotide nucleotidyltransferase from Clostridium botulinum (strain 657 / Type Ba4).